Consider the following 213-residue polypeptide: mRNA-decapping protein OPG121 (213 aa).

The N(7)-methyl-GTP site is built by E16 and R50. Positions 30–209 (KDTHVFAACI…EYLSYIYNML (180 aa)) constitute a Nudix hydrolase domain. The Nudix box motif lies at 111–132 (GKLDKKESIKDCLRRELKEESD). E117, E126, E130, D151, and E183 together coordinate Mg(2+). The Nucleophile role is filled by E126. D151 contributes to the N(7)-methyl-GTP binding site.

The protein belongs to the Nudix hydrolase family. The cofactor is Mg(2+). Mn(2+) serves as cofactor.

It carries out the reaction a 5'-end (N(7)-methyl 5'-triphosphoguanosine)-guanosine in mRNA + H2O = a 5'-end phospho-guanosine in mRNA + N(7)-methyl-GDP + 2 H(+). Its function is as follows. Decapping enzyme that remove the protective 5'-cap from both host and viral mRNAs to commit transcripts for decay by the cellular exonuclease XRN1. Accelerates viral and cellular mRNA turnover to eliminate competing host mRNAs and allow stage-specific synthesis of viral proteins. Acceleration of the turnover of cellular transcripts may even promote the shutoff of host protein synthesis. The polypeptide is mRNA-decapping protein OPG121 (OPG121) (Homo sapiens (Human)).